The chain runs to 392 residues: Chalcone synthase B (392 aa).

The active site involves Cys-167.

The protein belongs to the thiolase-like superfamily. Chalcone/stilbene synthases family. Expressed at low level in seedlings after illumination with UV light. No expression in flowers or tissue culture.

It catalyses the reaction (E)-4-coumaroyl-CoA + 3 malonyl-CoA + 3 H(+) = 2',4,4',6'-tetrahydroxychalcone + 3 CO2 + 4 CoA. It functions in the pathway secondary metabolite biosynthesis; flavonoid biosynthesis. Functionally, the primary product of this enzyme is 4,2',4',6'-tetrahydroxychalcone (also termed naringenin-chalcone or chalcone) which can under specific conditions spontaneously isomerize into naringenin. The sequence is that of Chalcone synthase B (CHSB) from Petunia hybrida (Petunia).